The following is a 507-amino-acid chain: Histidine ammonia-lyase (507 aa).

Residues 145 to 147 constitute a cross-link (5-imidazolinone (Ala-Gly)); the sequence is ASG. Ser-146 carries the 2,3-didehydroalanine (Ser) modification.

The protein belongs to the PAL/histidase family. Contains an active site 4-methylidene-imidazol-5-one (MIO), which is formed autocatalytically by cyclization and dehydration of residues Ala-Ser-Gly.

It localises to the cytoplasm. It carries out the reaction L-histidine = trans-urocanate + NH4(+). It participates in amino-acid degradation; L-histidine degradation into L-glutamate; N-formimidoyl-L-glutamate from L-histidine: step 1/3. This chain is Histidine ammonia-lyase, found in Treponema denticola (strain ATCC 35405 / DSM 14222 / CIP 103919 / JCM 8153 / KCTC 15104).